Here is a 173-residue protein sequence, read N- to C-terminus: Crossover junction endodeoxyribonuclease RuvC (173 aa).

Active-site residues include D8, E67, and D139. Residues D8, E67, and D139 each coordinate Mg(2+).

The protein belongs to the RuvC family. In terms of assembly, homodimer which binds Holliday junction (HJ) DNA. The HJ becomes 2-fold symmetrical on binding to RuvC with unstacked arms; it has a different conformation from HJ DNA in complex with RuvA. In the full resolvosome a probable DNA-RuvA(4)-RuvB(12)-RuvC(2) complex forms which resolves the HJ. Mg(2+) is required as a cofactor.

The protein localises to the cytoplasm. It carries out the reaction Endonucleolytic cleavage at a junction such as a reciprocal single-stranded crossover between two homologous DNA duplexes (Holliday junction).. Functionally, the RuvA-RuvB-RuvC complex processes Holliday junction (HJ) DNA during genetic recombination and DNA repair. Endonuclease that resolves HJ intermediates. Cleaves cruciform DNA by making single-stranded nicks across the HJ at symmetrical positions within the homologous arms, yielding a 5'-phosphate and a 3'-hydroxyl group; requires a central core of homology in the junction. The consensus cleavage sequence is 5'-(A/T)TT(C/G)-3'. Cleavage occurs on the 3'-side of the TT dinucleotide at the point of strand exchange. HJ branch migration catalyzed by RuvA-RuvB allows RuvC to scan DNA until it finds its consensus sequence, where it cleaves and resolves the cruciform DNA. The chain is Crossover junction endodeoxyribonuclease RuvC from Enterobacter sp. (strain 638).